Consider the following 145-residue polypeptide: D-aminoacyl-tRNA deacylase (145 aa).

Positions 133-134 (GP) match the Gly-cisPro motif, important for rejection of L-amino acids motif.

This sequence belongs to the DTD family. In terms of assembly, homodimer.

It localises to the cytoplasm. The catalysed reaction is glycyl-tRNA(Ala) + H2O = tRNA(Ala) + glycine + H(+). The enzyme catalyses a D-aminoacyl-tRNA + H2O = a tRNA + a D-alpha-amino acid + H(+). Functionally, an aminoacyl-tRNA editing enzyme that deacylates mischarged D-aminoacyl-tRNAs. Also deacylates mischarged glycyl-tRNA(Ala), protecting cells against glycine mischarging by AlaRS. Acts via tRNA-based rather than protein-based catalysis; rejects L-amino acids rather than detecting D-amino acids in the active site. By recycling D-aminoacyl-tRNA to D-amino acids and free tRNA molecules, this enzyme counteracts the toxicity associated with the formation of D-aminoacyl-tRNA entities in vivo and helps enforce protein L-homochirality. In Cutibacterium acnes (strain DSM 16379 / KPA171202) (Propionibacterium acnes), this protein is D-aminoacyl-tRNA deacylase.